Reading from the N-terminus, the 368-residue chain is Alanine racemase (368 aa).

K34 functions as the Proton acceptor; specific for D-alanine in the catalytic mechanism. K34 carries the post-translational modification N6-(pyridoxal phosphate)lysine. R132 is a substrate binding site. Catalysis depends on Y261, which acts as the Proton acceptor; specific for L-alanine. M309 provides a ligand contact to substrate.

It belongs to the alanine racemase family. It depends on pyridoxal 5'-phosphate as a cofactor.

The enzyme catalyses L-alanine = D-alanine. It participates in amino-acid biosynthesis; D-alanine biosynthesis; D-alanine from L-alanine: step 1/1. In terms of biological role, catalyzes the interconversion of L-alanine and D-alanine. May also act on other amino acids. The chain is Alanine racemase (alr) from Carboxydothermus hydrogenoformans (strain ATCC BAA-161 / DSM 6008 / Z-2901).